The primary structure comprises 216 residues: Ras-related protein RABA1a (216 aa).

Residue 20-27 (GDSGVGKS) participates in GTP binding. Residues 42–50 (SKSTIGVEF) carry the Effector region motif. GTP is bound by residues 68–72 (DTAGQ), 126–129 (NKCD), and 156–157 (SA). 2 S-geranylgeranyl cysteine lipidation sites follow: C213 and C214.

Belongs to the small GTPase superfamily. Rab family.

It is found in the cell membrane. In terms of biological role, involved in auxin-mediated response. May be involved in vesicle trafficking of components involved in polar auxin transport. Binds GTP and GDP and possesses intrinsic GTPase activity. This Arabidopsis thaliana (Mouse-ear cress) protein is Ras-related protein RABA1a (RABA1A).